The sequence spans 804 residues: Leucine--tRNA ligase (804 aa).

Positions 39–50 match the 'HIGH' region motif; the sequence is PYPSGKGLHVGH. The 'KMSKS' region signature appears at 573 to 577; sequence KMSKS. Position 576 (Lys-576) interacts with ATP.

It belongs to the class-I aminoacyl-tRNA synthetase family.

The protein resides in the cytoplasm. The catalysed reaction is tRNA(Leu) + L-leucine + ATP = L-leucyl-tRNA(Leu) + AMP + diphosphate. In Lactobacillus delbrueckii subsp. bulgaricus (strain ATCC 11842 / DSM 20081 / BCRC 10696 / JCM 1002 / NBRC 13953 / NCIMB 11778 / NCTC 12712 / WDCM 00102 / Lb 14), this protein is Leucine--tRNA ligase.